The chain runs to 153 residues: MTTKGTPSRRAARALAFQILYGLGFSPAASVKQLREAYASSPDVADKGRSPQPEGFAWELIEGIWTEQANIDEVIGLFSQNWRIDRIGRVELTLLRIAVYEMLYRIDVPPKVAINEALELSKQFGDANARGFINGILDAAAKALEGGQLKPRV.

The protein belongs to the NusB family.

Functionally, involved in transcription antitermination. Required for transcription of ribosomal RNA (rRNA) genes. Binds specifically to the boxA antiterminator sequence of the ribosomal RNA (rrn) operons. This Nitratidesulfovibrio vulgaris (strain ATCC 29579 / DSM 644 / CCUG 34227 / NCIMB 8303 / VKM B-1760 / Hildenborough) (Desulfovibrio vulgaris) protein is Transcription antitermination protein NusB.